Consider the following 81-residue polypeptide: ATP synthase subunit c, chloroplastic (81 aa).

2 helical membrane-spanning segments follow: residues 3-23 (PIIS…ASIG) and 57-77 (LAFM…LLFA).

It belongs to the ATPase C chain family. F-type ATPases have 2 components, F(1) - the catalytic core - and F(0) - the membrane proton channel. F(1) has five subunits: alpha(3), beta(3), gamma(1), delta(1), epsilon(1). F(0) has four main subunits: a(1), b(1), b'(1) and c(10-14). The alpha and beta chains form an alternating ring which encloses part of the gamma chain. F(1) is attached to F(0) by a central stalk formed by the gamma and epsilon chains, while a peripheral stalk is formed by the delta, b and b' chains.

It localises to the plastid. Its subcellular location is the chloroplast thylakoid membrane. Its function is as follows. F(1)F(0) ATP synthase produces ATP from ADP in the presence of a proton or sodium gradient. F-type ATPases consist of two structural domains, F(1) containing the extramembraneous catalytic core and F(0) containing the membrane proton channel, linked together by a central stalk and a peripheral stalk. During catalysis, ATP synthesis in the catalytic domain of F(1) is coupled via a rotary mechanism of the central stalk subunits to proton translocation. Functionally, key component of the F(0) channel; it plays a direct role in translocation across the membrane. A homomeric c-ring of between 10-14 subunits forms the central stalk rotor element with the F(1) delta and epsilon subunits. The sequence is that of ATP synthase subunit c, chloroplastic from Phaseolus vulgaris (Kidney bean).